A 327-amino-acid polypeptide reads, in one-letter code: Annexin A8 (327 aa).

Annexin repeat units lie at residues 21–92 (FNPD…ALMY), 93–164 (PPYR…CLLQ), 177–249 (GLAL…TVVK), and 253–324 (NLHS…SLVG). 4 residues coordinate Ca(2+): Met-266, Gly-268, Gly-270, and Asp-310.

Belongs to the annexin family.

In terms of biological role, this protein is an anticoagulant protein that acts as an indirect inhibitor of the thromboplastin-specific complex, which is involved in the blood coagulation cascade. The protein is Annexin A8 of Homo sapiens (Human).